Reading from the N-terminus, the 585-residue chain is Serine/threonine-protein kinase Nek3 (585 aa).

The region spanning 4 to 258 is the Protein kinase domain; sequence YEVLEQIGKG…AAELLKHPHL (255 aa). Residues 10-18 and Lys33 each bind ATP; that span reads IGKGSFGSA. The active-site Proton acceptor is the Asp129. Disordered stretches follow at residues 354–413 and 489–511; these read GNHS…TPVN and DSSK…SNPL. Composition is skewed to polar residues over residues 400–413 and 498–511; these read RASQ…TPVN and SSDP…SNPL.

The protein belongs to the protein kinase superfamily. NEK Ser/Thr protein kinase family. NIMA subfamily. As to quaternary structure, interacts with PLIM2B. In terms of tissue distribution, expressed in pollen grains.

It catalyses the reaction L-seryl-[protein] + ATP = O-phospho-L-seryl-[protein] + ADP + H(+). The catalysed reaction is L-threonyl-[protein] + ATP = O-phospho-L-threonyl-[protein] + ADP + H(+). May be involved in plant development processes. May function downstream of DCW11 in retrograde signaling from the mitochondria to the nucleus. Seems to be involved in the mechanism of cytoplasmic male sterility (CMS) occurrence. This is Serine/threonine-protein kinase Nek3 from Oryza sativa subsp. japonica (Rice).